Reading from the N-terminus, the 190-residue chain is Probable RNA-binding protein 18 (190 aa).

Positions 25 to 106 (HRLWIGNLDP…KKLVVRWAHA (82 aa)) constitute an RRM domain. Positions 166–190 (VYSYFKPPDKKRTTPYSRTAWKSRR) are disordered.

This chain is Probable RNA-binding protein 18 (RBM18), found in Pongo abelii (Sumatran orangutan).